Consider the following 245-residue polypeptide: MRRMLVTYMTLGYPNLESFYQFIEKSVELGTDILEIGLPPKYAKYDGPVIRKSYKAVTSWLKDYITPLKEVRKKVNIPIIILTYLEDYLSNLDNFLTTLHEIGIDGVLFPDLLIDFIDEYEEYVSKIKGKGVKAVLFTGPSLPDNLIIKASRISDIFLYYGVRPTTGIIIPVSVDSLITRVRNLVQNKLVVGFGLNDFNDLRKALSAGADGVAIGTAFIEEIEKNGIQSALHLVKTIRGILDEYS.

Active-site proton acceptor residues include glutamate 35 and aspartate 46.

This sequence belongs to the TrpA family. In terms of assembly, tetramer of two alpha and two beta chains.

The catalysed reaction is (1S,2R)-1-C-(indol-3-yl)glycerol 3-phosphate + L-serine = D-glyceraldehyde 3-phosphate + L-tryptophan + H2O. Its pathway is amino-acid biosynthesis; L-tryptophan biosynthesis; L-tryptophan from chorismate: step 5/5. In terms of biological role, the alpha subunit is responsible for the aldol cleavage of indoleglycerol phosphate to indole and glyceraldehyde 3-phosphate. This is Tryptophan synthase alpha chain from Sulfurisphaera tokodaii (strain DSM 16993 / JCM 10545 / NBRC 100140 / 7) (Sulfolobus tokodaii).